The following is a 131-amino-acid chain: Small ribosomal subunit protein bS6 (131 aa).

Positions 98–131 are disordered; sequence EASPMARARDERDSRRGPAGERSYDEAHAEEIGE. A compositionally biased stretch (basic and acidic residues) spans 104-131; that stretch reads RARDERDSRRGPAGERSYDEAHAEEIGE.

Belongs to the bacterial ribosomal protein bS6 family.

Functionally, binds together with bS18 to 16S ribosomal RNA. The sequence is that of Small ribosomal subunit protein bS6 from Shewanella putrefaciens (strain CN-32 / ATCC BAA-453).